Consider the following 676-residue polypeptide: tRNA 5-methylaminomethyl-2-thiouridine biosynthesis bifunctional protein MnmC (676 aa).

The tract at residues 1 to 241 (MFTVTPAKIY…KRECLCGIKN (241 aa)) is tRNA (mnm(5)s(2)U34)-methyltransferase. Residues 268–676 (IGGGIASLFT…RKLLKGTEIK (409 aa)) are FAD-dependent cmnm(5)s(2)U34 oxidoreductase.

It in the N-terminal section; belongs to the methyltransferase superfamily. tRNA (mnm(5)s(2)U34)-methyltransferase family. In the C-terminal section; belongs to the DAO family. Requires FAD as cofactor.

The protein resides in the cytoplasm. The catalysed reaction is 5-aminomethyl-2-thiouridine(34) in tRNA + S-adenosyl-L-methionine = 5-methylaminomethyl-2-thiouridine(34) in tRNA + S-adenosyl-L-homocysteine + H(+). In terms of biological role, catalyzes the last two steps in the biosynthesis of 5-methylaminomethyl-2-thiouridine (mnm(5)s(2)U) at the wobble position (U34) in tRNA. Catalyzes the FAD-dependent demodification of cmnm(5)s(2)U34 to nm(5)s(2)U34, followed by the transfer of a methyl group from S-adenosyl-L-methionine to nm(5)s(2)U34, to form mnm(5)s(2)U34. This Histophilus somni (strain 129Pt) (Haemophilus somnus) protein is tRNA 5-methylaminomethyl-2-thiouridine biosynthesis bifunctional protein MnmC.